Reading from the N-terminus, the 132-residue chain is Dinoflagellate viral nucleoprotein 5 (132 aa).

A compositionally biased stretch (basic residues) spans methionine 1–lysine 44. The tract at residues methionine 1 to isoleucine 84 is disordered. Residues glycine 57–lysine 66 are compositionally biased toward polar residues.

Phosphorylated.

Its subcellular location is the nucleus. The protein resides in the chromosome. In terms of biological role, DNA-binding protein, which similarly to histones, may compact DNA into chromatin. This is Dinoflagellate viral nucleoprotein 5 from Hematodinium sp.